Reading from the N-terminus, the 100-residue chain is Small ribosomal subunit protein uS14c (100 aa).

Belongs to the universal ribosomal protein uS14 family. In terms of assembly, part of the 30S ribosomal subunit.

It is found in the plastid. The protein resides in the chloroplast. In terms of biological role, binds 16S rRNA, required for the assembly of 30S particles. The protein is Small ribosomal subunit protein uS14c of Capsella bursa-pastoris (Shepherd's purse).